The chain runs to 1049 residues: Cellulose synthase A catalytic subunit 4 [UDP-forming] (1049 aa).

At 1 to 215 (MEPNTMASFD…ISSSKISPYR (215 aa)) the chain is on the cytoplasmic side. Positions 23, 26, 42, 45, 50, 53, 65, and 68 each coordinate Zn(2+). An RING-type; degenerate zinc finger spans residues 23–69 (CKVCGDEVKDDDNGQTFVACHVCVYPVCKPCYEYERSNGNKCCPQCN). Residues 76-98 (KGSPKIAGDEENNGPDDSDDELN) are disordered. Residues 84–96 (DEENNGPDDSDDE) are compositionally biased toward acidic residues. Ser-135 carries the phosphoserine modification. Residues 216–236 (IVIVLRLVILVFFFRFRILTP) traverse the membrane as a helical segment. Residues 237–239 (AKD) are Extracellular-facing. The chain crosses the membrane as a helical span at residues 240–260 (AYPLWLISVICEIWFALSWIL). Over 261–831 (DQFPKWFPIN…INTIVYPFTS (571 aa)) the chain is Cytoplasmic. UDP-alpha-D-glucose is bound by residues Ser-299, Lys-305, Glu-306, and Asp-335. Asp-335 is an active-site residue. Residues 389–416 (VKDRRAMKREYEEFKVRINALVAKAQKK) are a coiled coil. Lys-476 serves as a coordination point for UDP-alpha-D-glucose. The Mn(2+) site is built by Lys-477 and Asp-501. Asp-748 is a catalytic residue. The chain crosses the membrane as a helical span at residues 832-852 (IPLLAYCTIPAVCLLTGKFII). Over 853–857 (PTINN) the chain is Extracellular. A helical membrane pass occupies residues 858-878 (FASIWFLALFLSIIATAILEL). Topologically, residues 879–895 (RWSGVSINDLWRNEQFW) are cytoplasmic. The helical transmembrane segment at 896–916 (VIGGVSAHLFAVFQGLLKVLF) threads the bilayer. Over 917–945 (GVDTNFTVTSKGASDEADEFGDLYLFKWT) the chain is Extracellular. The N-linked (GlcNAc...) asparagine glycan is linked to Asn-921. A helical transmembrane segment spans residues 946 to 966 (TLLIPPTTLIILNMVGVVAGV). Over 967–977 (SDAINNGYGSW) the chain is Cytoplasmic. The helical transmembrane segment at 978-998 (GPLFGKLFFAFWVIVHLYPFL) threads the bilayer. Residues 999 to 1007 (KGLMGRQNR) are Extracellular-facing. A helical membrane pass occupies residues 1008–1028 (TPTIVVLWSILLASIFSLVWV). The Cytoplasmic portion of the chain corresponds to 1029 to 1049 (RIDPFLPKQTGPLLKQCGVDC).

Belongs to the glycosyltransferase 2 family. Plant cellulose synthase subfamily. In terms of assembly, interacts with CESA7 and CESA8. Assembly with CESA7 and CESA8 is required for functional complex and localization in secondary cell wall deposition sites. Interacts with STL1 and STL2, but not with GOT1. It depends on Zn(2+) as a cofactor. Requires Mn(2+) as cofactor. In terms of processing, S-acylated. Confined to secondary cell wall developing tissues such as xylems and interfascicular regions. Expressed in roots, hypocotyls, leaves, inflorescences and flowers.

The protein localises to the cell membrane. The catalysed reaction is [(1-&gt;4)-beta-D-glucosyl](n) + UDP-alpha-D-glucose = [(1-&gt;4)-beta-D-glucosyl](n+1) + UDP + H(+). The protein operates within glycan metabolism; plant cellulose biosynthesis. In terms of biological role, catalytic subunit of cellulose synthase terminal complexes ('rosettes'), required for beta-1,4-glucan microfibril crystallization, a major mechanism of the cell wall formation. Involved in the secondary cell wall formation. Required for the xylem cell wall thickening. The sequence is that of Cellulose synthase A catalytic subunit 4 [UDP-forming] from Arabidopsis thaliana (Mouse-ear cress).